The primary structure comprises 288 residues: Large ribosomal subunit protein uL2 (288 aa).

The tract at residues 232–265 (GTAMNPVDHPHGGGEGKTKGKHPESPWGWKTKGY) is disordered. Residues 239–255 (DHPHGGGEGKTKGKHPE) show a composition bias toward basic and acidic residues.

The protein belongs to the universal ribosomal protein uL2 family. Part of the 50S ribosomal subunit. Forms a bridge to the 30S subunit in the 70S ribosome.

Functionally, one of the primary rRNA binding proteins. Required for association of the 30S and 50S subunits to form the 70S ribosome, for tRNA binding and peptide bond formation. It has been suggested to have peptidyltransferase activity; this is somewhat controversial. Makes several contacts with the 16S rRNA in the 70S ribosome. The sequence is that of Large ribosomal subunit protein uL2 from Hydrogenobaculum sp. (strain Y04AAS1).